Here is a 199-residue protein sequence, read N- to C-terminus: Tumor protein p53-inducible nuclear protein 2 (199 aa).

The LIR signature appears at 26 to 41; it reads VSEEDEVDGWLIIDLQ. 3 disordered regions span residues 41–69, 117–153, and 173–199; these read QDSY…LMDE, LESG…LHHA, and LQRA…ARES. Residues 47-64 are compositionally biased toward pro residues; that stretch reads PPDPRASPAPAGRPPPAP. Ser-136 bears the Phosphoserine mark.

As to quaternary structure, interacts with VMP1, GABARAP, GABARAPL1, GABARAPL2, MAP1LC3A, MAP1LC3B, MAP1LC3C and THRA. As to expression, abundantly expressed in skeletal muscle and heart and expression is highly repressed in muscle from obese diabetic rats.

The protein localises to the cytoplasm. It is found in the cytosol. It localises to the nucleus. The protein resides in the PML body. Its subcellular location is the cytoplasmic vesicle. The protein localises to the autophagosome. Functionally, dual regulator of transcription and autophagy. Positively regulates autophagy and is required for autophagosome formation and processing. May act as a scaffold protein that recruits MAP1LC3A, GABARAP and GABARAPL2 and brings them to the autophagosome membrane by interacting with VMP1 where, in cooperation with the BECN1-PI3-kinase class III complex, they trigger autophagosome development. Acts as a transcriptional activator of THRA. This chain is Tumor protein p53-inducible nuclear protein 2 (Tp53inp2), found in Rattus norvegicus (Rat).